A 442-amino-acid polypeptide reads, in one-letter code: Protoheme IX farnesyltransferase (442 aa).

The tract at residues 1-167 (MGVYSLLVLG…AYVQLMKPRL (167 aa)) is unknown. 11 consecutive transmembrane segments (helical) span residues 49-69 (AAAL…RTGA), 76-96 (AVTL…YTAM), 106-126 (VHLT…AWTL), 167-187 (LMWL…SQLG), 194-214 (AATV…SGTF), 245-265 (LAFG…VNLL), 267-287 (AVLG…VLKP), 308-328 (WVAV…VIFL), 365-385 (HIVY…ELTG), 386-406 (LGPL…YFAI), and 421-441 (FHAS…DTMV). The prenyltransferase stretch occupies residues 168 to 439 (MWLLCLVAGA…CLLVAVVLDT (272 aa)).

The protein in the C-terminal section; belongs to the UbiA prenyltransferase family. Protoheme IX farnesyltransferase subfamily.

The protein resides in the cell membrane. It carries out the reaction heme b + (2E,6E)-farnesyl diphosphate + H2O = Fe(II)-heme o + diphosphate. The protein operates within porphyrin-containing compound metabolism; heme O biosynthesis; heme O from protoheme: step 1/1. Its function is as follows. Converts heme B (protoheme IX) to heme O by substitution of the vinyl group on carbon 2 of heme B porphyrin ring with a hydroxyethyl farnesyl side group. The sequence is that of Protoheme IX farnesyltransferase (ctaB) from Halobacterium salinarum (strain ATCC 700922 / JCM 11081 / NRC-1) (Halobacterium halobium).